Here is a 251-residue protein sequence, read N- to C-terminus: Lactose phosphotransferase system repressor (251 aa).

One can recognise an HTH deoR-type domain in the interval 3 to 58 (KYDRLDEITKLVNKRGSVRTNEIVEDLNVSDMTVRRDLAELEEKGVLTKIHGGARS). The H-T-H motif DNA-binding region spans 20–39 (VRTNEIVEDLNVSDMTVRRD).

Its function is as follows. Repressor of the lactose catabolism operon. Galactose-6-phosphate is the inducer. In Staphylococcus epidermidis (strain ATCC 35984 / DSM 28319 / BCRC 17069 / CCUG 31568 / BM 3577 / RP62A), this protein is Lactose phosphotransferase system repressor (lacR).